The sequence spans 447 residues: Tubulin beta-1 chain (447 aa).

Gln11 provides a ligand contact to GTP. Position 40 is a phosphoserine (Ser40). The GTP site is built by Glu69, Ser138, Gly142, Thr143, Gly144, Asn204, and Asn226. A Mg(2+)-binding site is contributed by Glu69. Position 339 is a phosphoserine (Ser339). Positions 427-447 are disordered; that stretch reads EATADEDAEFEEEQEAEVDEN. The span at 429 to 447 shows a compositional bias: acidic residues; it reads TADEDAEFEEEQEAEVDEN.

The protein belongs to the tubulin family. Dimer of alpha and beta chains. A typical microtubule is a hollow water-filled tube with an outer diameter of 25 nm and an inner diameter of 15 nM. Alpha-beta heterodimers associate head-to-tail to form protofilaments running lengthwise along the microtubule wall with the beta-tubulin subunit facing the microtubule plus end conferring a structural polarity. Microtubules usually have 13 protofilaments but different protofilament numbers can be found in some organisms and specialized cells. Interacts with mgr and Vhl. Mg(2+) serves as cofactor.

The protein resides in the cytoplasm. Its subcellular location is the cytoskeleton. Its function is as follows. Tubulin is the major constituent of microtubules, a cylinder consisting of laterally associated linear protofilaments composed of alpha- and beta-tubulin heterodimers. Microtubules grow by the addition of GTP-tubulin dimers to the microtubule end, where a stabilizing cap forms. Below the cap, tubulin dimers are in GDP-bound state, owing to GTPase activity of alpha-tubulin. The polypeptide is Tubulin beta-1 chain (betaTub56D) (Drosophila melanogaster (Fruit fly)).